The sequence spans 460 residues: Putative glycoside/cation symporter YagG (460 aa).

The Cytoplasmic portion of the chain corresponds to 1 to 9 (MTQLTMKDK). The next 2 helical transmembrane spans lie at 10-30 (IGYGLGDTACGFVWQATMFLL) and 31-51 (AYFYTDVFGLSAGIMGTLFLV). At 52–78 (SRVLDAVTDPLMGLLVDRTRTRHGQFR) the chain is on the cytoplasmic side. Residues 79–99 (PFLLWGAIPFGIVCVLTFYTP) traverse the membrane as a helical segment. Residues 100–106 (DFSAQGK) lie on the Periplasmic side of the membrane. The helical transmembrane segment at 107-127 (IIYACVTYILLTLVYTFVNVP) threads the bilayer. Topologically, residues 128 to 150 (YCAMPGVITADPKERHALQSWRF) are cytoplasmic. The helical transmembrane segment at 151–171 (FLAAAGSLAISGIALPLVSII) threads the bilayer. The Periplasmic segment spans residues 172-179 (GKGDEQVG). Residues 180-200 (YFGAMCVLGLSGVVLLYVCFF) form a helical membrane-spanning segment. The Cytoplasmic portion of the chain corresponds to 201 to 262 (TTKERYTFEV…FVKYVMDHPE (62 aa)). A helical membrane pass occupies residues 263–283 (LATQFLLYGSLATMFGSLCSS). At 284–308 (RLLGRFDRVTAFKWIIVAYSLISLL) the chain is on the periplasmic side. Residues 309-329 (IFVTPAEHIALIFALNILFLF) traverse the membrane as a helical segment. The Cytoplasmic portion of the chain corresponds to 330 to 366 (VFNTTTPLQWLMASDVVDYEESRSGRRLDGLVFSTYL). Residues 367-387 (FSLKIGLAIGGAVVGWILAYV) traverse the membrane as a helical segment. The Periplasmic portion of the chain corresponds to 388–405 (NYSASSSVQPVEVLTTIK). Residues 406–426 (ILFCVVPVVLYAGMFIMLSLY) traverse the membrane as a helical segment. The Cytoplasmic segment spans residues 427–460 (KLTDARVEAISRQLIKHRAAQGEAVPDAATAASH).

Belongs to the sodium:galactoside symporter (TC 2.A.2) family.

The protein localises to the cell inner membrane. This Escherichia coli (strain K12) protein is Putative glycoside/cation symporter YagG (yagG).